The following is a 306-amino-acid chain: UDP-3-O-acyl-N-acetylglucosamine deacetylase (306 aa).

Positions 81, 241, and 245 each coordinate Zn(2+). The active-site Proton donor is the His268.

It belongs to the LpxC family. The cofactor is Zn(2+).

The enzyme catalyses a UDP-3-O-[(3R)-3-hydroxyacyl]-N-acetyl-alpha-D-glucosamine + H2O = a UDP-3-O-[(3R)-3-hydroxyacyl]-alpha-D-glucosamine + acetate. It participates in glycolipid biosynthesis; lipid IV(A) biosynthesis; lipid IV(A) from (3R)-3-hydroxytetradecanoyl-[acyl-carrier-protein] and UDP-N-acetyl-alpha-D-glucosamine: step 2/6. In terms of biological role, catalyzes the hydrolysis of UDP-3-O-myristoyl-N-acetylglucosamine to form UDP-3-O-myristoylglucosamine and acetate, the committed step in lipid A biosynthesis. This is UDP-3-O-acyl-N-acetylglucosamine deacetylase from Hydrogenovibrio crunogenus (strain DSM 25203 / XCL-2) (Thiomicrospira crunogena).